The following is a 196-amino-acid chain: dITP/XTP pyrophosphatase (196 aa).

7–12 serves as a coordination point for substrate; it reads THNPGK. The Mg(2+) site is built by Asp40 and Asp69. The active-site Proton acceptor is the Asp69. Residues Ser70, 150–153, Lys173, and 178–179 contribute to the substrate site; these read FGYD and HR.

This sequence belongs to the HAM1 NTPase family. In terms of assembly, homodimer. Mg(2+) is required as a cofactor.

The enzyme catalyses XTP + H2O = XMP + diphosphate + H(+). The catalysed reaction is dITP + H2O = dIMP + diphosphate + H(+). It carries out the reaction ITP + H2O = IMP + diphosphate + H(+). Pyrophosphatase that catalyzes the hydrolysis of nucleoside triphosphates to their monophosphate derivatives, with a high preference for the non-canonical purine nucleotides XTP (xanthosine triphosphate), dITP (deoxyinosine triphosphate) and ITP. Seems to function as a house-cleaning enzyme that removes non-canonical purine nucleotides from the nucleotide pool, thus preventing their incorporation into DNA/RNA and avoiding chromosomal lesions. The polypeptide is dITP/XTP pyrophosphatase (Exiguobacterium sp. (strain ATCC BAA-1283 / AT1b)).